Consider the following 309-residue polypeptide: Cytochrome c biogenesis protein CcsA (309 aa).

Transmembrane regions (helical) follow at residues 18 to 38 (LGLLVFYILLVNLPISLGAFF), 43 to 63 (FFIVRVLTILINFLITLQLLF), 67 to 87 (ISGHFPISNLYESLYFLTWGI), 102 to 122 (IIPSIAIPIELLTVAFACFVL), 148 to 168 (VMLSYAALIIGSLLSASVLFI), 216 to 236 (SILIGFVLLTLGLISGAVWAN), 250 to 267 (TWAFISWMFYAAYLHMRI), and 279 to 299 (LATTGFLVVLICYLGVNFLGI).

Belongs to the CcmF/CycK/Ccl1/NrfE/CcsA family. In terms of assembly, may interact with ccs1.

The protein resides in the cellular thylakoid membrane. In terms of biological role, required during biogenesis of c-type cytochromes (cytochrome c6 and cytochrome f) at the step of heme attachment. This Prochlorococcus marinus (strain MIT 9215) protein is Cytochrome c biogenesis protein CcsA.